A 185-amino-acid polypeptide reads, in one-letter code: HTH-type transcriptional regulator Hpr (185 aa).

Positions 13-157 (AMIFSQRIAQ…LIAILRNIYG (145 aa)) constitute an HTH marR-type domain. The segment at residues 63-86 (ISEIAKFGVMHVSTAFNFSKKLEE) is a DNA-binding region (H-T-H motif).

As to quaternary structure, homodimer.

In terms of biological role, negative regulator of protease production and sporulation. The sequence is that of HTH-type transcriptional regulator Hpr from Bacillus mycoides (strain KBAB4) (Bacillus weihenstephanensis).